The primary structure comprises 339 residues: Tetraacyldisaccharide 4'-kinase (339 aa).

62 to 69 (VAGGTGKT) serves as a coordination point for ATP.

It belongs to the LpxK family.

The catalysed reaction is a lipid A disaccharide + ATP = a lipid IVA + ADP + H(+). Its pathway is glycolipid biosynthesis; lipid IV(A) biosynthesis; lipid IV(A) from (3R)-3-hydroxytetradecanoyl-[acyl-carrier-protein] and UDP-N-acetyl-alpha-D-glucosamine: step 6/6. Transfers the gamma-phosphate of ATP to the 4'-position of a tetraacyldisaccharide 1-phosphate intermediate (termed DS-1-P) to form tetraacyldisaccharide 1,4'-bis-phosphate (lipid IVA). This is Tetraacyldisaccharide 4'-kinase from Xylella fastidiosa (strain M23).